The primary structure comprises 1379 residues: MAQTFLGQKRLRKYYGKIREVLDMPNLIEVQKSSYDLFLRSGDAPQPLDGEGIKGVFQSVFPIKDFNETSVLEFVNYALERPKYDVDECMQRDMTYSAPLKVTLRLIVFDVDEDTGAKSVKDIKEQDVFMGDMPLMTPNGTFIVNGTERVIVSQMHRSPGVFFDHDKGKTHSSGKLLFACRIIPYRGSWLDFEFDAKDIVFARIDRRRKLPVTTLLYALGLDQEGIMDAYYNTVNFKLEKSRGWVTPFFPERVRGTRPTYDLVDAATGEIICEAGKKVTPRAVKKMIDEGNITELLVPFEHIVGKYVAKDIINEENGAIYVEAGDELTLEYDKDGDIIGGSVKELLDAGITDIPVLDIDNVNVGPYMRNTMAQDKNMSRETALMDIYRVMRPGEPPTVEAASALFDTLFFDSERYDLSAVGRVKMNMRLALDAEDTQRTLRKEDIVACIKALVELRDGKGDVDDIDHLGNRRVRSVGELMENQYRVGLLRMERAIKERMSSVEIDTVMPQDLINAKPAAAAVREFFGSSQLSQFMDQTNPLSEVTHKRRLSALGPGGLTRERAGFEVRDVHPTHYGRMCPIETPEGPNIGLINSLATFARVNKYGFIETPYRVVKDGQVTDEVHYMSATEEMRHTVAQANANLDEDNRFVNDLVSTRQSGDYTLAPNESVDLIDVSPKQLVSVAASLIPFLENDDANRALMGSNMQRQAVPLLRAEAPLVGTGIEEIVARDSGAAIMAKRAGVIDQIDAQRIVIRATSDLELGDAGVDIYRMRKFQRSNQNTCINQRPLVKVGQTVEKGEVIADGPSTDMGELALGKNVVVAFMPWNGYNYEDSILISERIARDDVFTSIHIEEFEVAARDTKLGPEEITRDIPNVGEEALRNLDEAGIVYIGADVEPGDILVGKITPKGESPMTPEEKLLRAIFGEKASDVRDTSLRVKPGDYGTVVEVRVFNRHGVEKDERALQIEREEVERLARDRDDELGILDRNIYARLRDLLLGKTAVKGPKGVRGNTVIDEDLLDNQLTRGQWWMLALEEEQDAQILEALNEQYEAQKRALDARFEDKVEKVRRGDDLPPGVMKMVKVFIAVKRKLQPGDKMAGRHGNKGVISRVVPMEDMPFLADGTPVDFCLNPLGVPSRMNVGQILETHMGWAARGLGLKIDDALQDYRRTGDLTPVRDAMREAYGEDVYEEGISSMDETQLIEAAGNVTRGVPIATPVFDGAKEDDVNDALVRAGFDQSGQSILFDGRTGEQFARPVTVGIKYLLKLHHLVDDKIHARSTGPYSLVTQQPLGGKAQFGGQRFGEMEVWALEAYGAAYTLQEMLTVKSDDVAGRTKVYESIVKGEDNFEAGVPESFNVLVKEVRGLGLNMELLDAEVEE.

It belongs to the RNA polymerase beta chain family. In terms of assembly, the RNAP catalytic core consists of 2 alpha, 1 beta, 1 beta' and 1 omega subunit. When a sigma factor is associated with the core the holoenzyme is formed, which can initiate transcription.

It carries out the reaction RNA(n) + a ribonucleoside 5'-triphosphate = RNA(n+1) + diphosphate. DNA-dependent RNA polymerase catalyzes the transcription of DNA into RNA using the four ribonucleoside triphosphates as substrates. This is DNA-directed RNA polymerase subunit beta from Ruegeria sp. (strain TM1040) (Silicibacter sp.).